The sequence spans 1666 residues: MATDGASCEPDFARAPEDAAGAPAEAARKEFDVDTLSKSELRMLLSVMEGELEARDLVIEALRARRKEVFIQERYGRFNLNDPFLALQRDYEAGAGDKEKKPVCTNPLSILEAVMAHCRKMQERMSTQLAAAESRQKKLEMEKLQLQTLEQEHKTLAARLEEERVKNKHVVLMLVKECKQLSGKVIEEAQKVEEALAQLEEEKKRASGLEEELSGEKRRSAEMEAQMEKQLSEFDTEREQLRAKLSREEAHTTDLKGEIDKMKKMTEQLKRGNDSKPSLSLPRKAKDRRWVSVSVGTEGPGTGSVACQTDLGVESTDHVKKLPLTVPAKPAAGSPLVAASAKGSGGATAPLARPGVDRQASHADLIVSSPPTIPPPNTNKIEENGPSTSSGPDTPSSTAPLPSNAAPPAIQTPNAAAQNYPAQAPSTHTVHSPCANAALHPALTPRVQAVRFRFQGNANNDQDQNGNNTQSPPSRDVSPTSRDNLVAKQLARNTVTQALSRFTSPQAGAPPRPGAPPTGEGSTHPPVGRTSLKTPGAARVDRGNPPPIPPKKPGLSQTPSPPHPQLKVLLDSSRASNAGPKVDHKTVALPPTSVPQGNRVINEESLPKSSSPQLPPKPSIDLTVAPAGCAVSALATSQVGAWRAETPGLKPPACSDRPLVIPTTIAFRCPINPVSASSCRPGASDSLLVTASGWSPSLTPLLMSGGPAPLAGRPTLLQQAAAQGNVTLLSMLLNEEGLDINHSCEDGHSALYSAAKNGHTDCVRLLLNAEAQVNAADNDGFTPVCAAAAQGHVKCVELLVAYHANINHAAAEGQTPLYLACKNGNKECIKLLLEAGTDRSVKTRDGWTPVHAAVDTGSVDGLKLLLYHRAPACGDGLDTEASRLGVFDLDEGEANPESTPTPVIPADLINHANREGWTAAHIAASKGFKNCLKILCRHGGLEPERKDKCNRTVHDVATDDCKHLLENWNALKIPLRISVGETQGDNSGPDEFESEHTICALNIRKPTSWDDFSKAVSQALTSHFQAISSDGWWSLEDVTLNSPAEASIGLSATSVLSITLGNVPWSVGQSFTQSPWDFLRKHQAEQVTVLLSGPQEGCLSSVTYASMIPLPVLQNYLRLVEQYHTVIFHGPEGSLQDYIALQLALCMKHRQAAVGFSCDIVRADVDAGFSKEQLVDLFIKSACLIPAKQSPASKKTIIILENLERASLSELLGDFLAPLENRSPESPYTFHKGNGTSECYYFHENCFLVGTIAKACLQGPDLLVQQHFRWVQLRWDGEPMQGLLQRFLRRKVVNKFRGKLPSPGEPVCKMVDWALSVWRQLNSCLSHLGTPEALLGPKCFLSCPVVPGHAQATVKWMSKLWNAVIAPRVQDAILSRASVNRQPGLGQTAAKKHPSPGQQAVVKAALSILLHKAVLHGCPLPRAELDQSMADFKGGSFPLSLVSSYSSCSKKKGENGAWRKVSTSPRKKSGWFFSPTWSKPDLSDEGIKSKTISQPNCNRNASLSRQKCLENDLSLALNLDQRLSLGSDDEADLVKELQSMCSSKSESDISKIADTRDDLRRFDSSRNRPAPSATVTNPRMPVSQKEVSPLSSHQTMERSNRTLKTELGVSRVKSFLPVPRSKITQCSQNTKRSSSSSNTRQIEINNNSKDEIWNLRNNEQIEKPNQ.

Disordered regions lie at residues 1–25, 202–224, 366–411, 457–481, and 501–619; these read MATDGASCEPDFARAPEDAAGAPAE, EKKRASGLEEELSGEKRRSAEME, IVSS…PAIQ, NANNDQDQNGNNTQSPPSRDVSPTS, and RFTS…PKPS. The stretch at 120 to 274 forms a coiled coil; the sequence is KMQERMSTQL…MTEQLKRGND (155 aa). Composition is skewed to low complexity over residues 385-398 and 457-468; these read GPSTSSGPDTPSST and NANNDQDQNGNN. Residues 469–481 show a composition bias toward polar residues; the sequence is TQSPPSRDVSPTS. R501 is subject to Asymmetric dimethylarginine. ANK repeat units lie at residues 712–742, 746–775, 779–808, 812–841, 845–874, and 915–945; these read GRPTLLQQAAAQGNVTLLSMLLNEEGLDINH, DGHSALYSAAKNGHTDCVRLLLNAEAQVNA, DGFTPVCAAAAQGHVKCVELLVAYHANINH, EGQTPLYLACKNGNKECIKLLLEAGTDRSV, DGWTPVHAAVDTGSVDGLKLLLYHRAPACG, and EGWTAAHIAASKGFKNCLKILCRHGGLEPER. Residue S1527 is modified to Phosphoserine. A compositionally biased stretch (basic and acidic residues) spans 1545 to 1566; it reads SESDISKIADTRDDLRRFDSSR. Disordered stretches follow at residues 1545–1601 and 1620–1666; these read SESD…RSNR and RSKI…KPNQ. A compositionally biased stretch (polar residues) spans 1585–1594; it reads KEVSPLSSHQ. Residues 1627 to 1641 are compositionally biased toward low complexity; the sequence is SQNTKRSSSSSNTRQ. A compositionally biased stretch (basic and acidic residues) spans 1648–1666; the sequence is SKDEIWNLRNNEQIEKPNQ.

Interacts with CTTN/cortactin SH3 domain. Interacts with STRN, STRN4/zinedin and MOB4/phocein; this interactions mediate the association with the STRIPAK core complex and may regulate dendritic spine distribution of the STRIPAK complex in hippocampal neurons. Activation of glutamate receptors weakens the interaction with STRN and STRN4.

It is found in the cytoplasm. The protein resides in the cell cortex. It localises to the cell projection. The protein localises to the dendritic spine. Its function is as follows. Regulates the dendritic spine distribution of CTTN/cortactin in hippocampal neurons, and thus controls dendritic spinogenesis and dendritic spine maintenance. Associates with the striatin-interacting phosphatase and kinase (STRIPAK) core complex to regulate dendritic spine distribution of the STRIPAK complex in hippocampal neurons. The chain is Cortactin-binding protein 2 (CTTNBP2) from Echinops telfairi (Lesser hedgehog tenrec).